The chain runs to 96 residues: Co-chaperonin GroES (96 aa).

It belongs to the GroES chaperonin family. In terms of assembly, heptamer of 7 subunits arranged in a ring. Interacts with the chaperonin GroEL.

It is found in the cytoplasm. Functionally, together with the chaperonin GroEL, plays an essential role in assisting protein folding. The GroEL-GroES system forms a nano-cage that allows encapsulation of the non-native substrate proteins and provides a physical environment optimized to promote and accelerate protein folding. GroES binds to the apical surface of the GroEL ring, thereby capping the opening of the GroEL channel. The chain is Co-chaperonin GroES from Shewanella amazonensis (strain ATCC BAA-1098 / SB2B).